A 409-amino-acid chain; its full sequence is MKLLYIFEKNIILRKILITFSLIIIFLLGRYVPIPGVLISAYKGQDNNFATLYSTVTGGNLSQVGVFSLGIGPMMTTMILLRLFTIGKYSSGVSQKVQQFRQNVVMLVIAIIQGLAIAISFQYHNGFSLTKLLLATMILVTGAYIISWIGNLNAEYGFGGMTILVVVGMLVGQFNNIPLIFELFQDGYQLAIILFLLWTLVAMYLMITFERSEYRIPVMRTSIHNRLVDDAYMPIKVNASGGMAFMYVYTLLMFPQYIIILLRSIFPTNPDITSYNDYFSLSSIQGVVIYMILMLVLSVAFTFVNIDPTKISEAMRESGDFIPNYRPGKETQSYLSKICYLFGTFSGFFMAFLGGVPLLFALGNDNLRTVSSMTGIFMMITGMSFMILDEFQVIRIRKQYTSVFENEEN.

The next 10 membrane-spanning stretches (helical) occupy residues 16 to 36 (ILIT…PIPG), 61 to 81 (LSQV…MILL), 104 to 124 (VVML…FQYH), 132 to 152 (LLLA…IGNL), 161 to 181 (MTIL…PLIF), 190 to 210 (LAII…ITFE), 242 to 262 (GMAF…IILL), 286 to 306 (GVVI…FVNI), 341 to 361 (LFGT…LLFA), and 374 to 394 (TGIF…FQVI).

This sequence belongs to the SecY/SEC61-alpha family. SecY2 subfamily. As to quaternary structure, component of the accessory SecA2/SecY2 protein translocase complex required to export cell wall proteins. May form heterotrimers with SecE and SecG subunits.

It is found in the cell membrane. Part of the accessory SecA2/SecY2 system specifically required for export of possible cell wall proteins. The central subunit of a protein translocation channel. The chain is Accessory Sec system protein translocase subunit SecY2 from Streptococcus agalactiae serotype Ia (strain ATCC 27591 / A909 / CDC SS700).